Consider the following 644-residue polypeptide: Acetyl-coenzyme A synthetase (644 aa).

Residues 190–193 and Thr-308 contribute to the CoA site; that span reads RGSK. ATP is bound by residues 384-386, 408-413, Asp-497, and Arg-512; these read GEP and DTWWQT. Ser-520 lines the CoA pocket. Residue Arg-523 coordinates ATP. 3 residues coordinate Mg(2+): Val-534, His-536, and Val-539. A CoA-binding site is contributed by Arg-581. An N6-acetyllysine modification is found at Lys-606.

The protein belongs to the ATP-dependent AMP-binding enzyme family. Mg(2+) serves as cofactor. Post-translationally, acetylated. Deacetylation by the SIR2-homolog deacetylase activates the enzyme.

The catalysed reaction is acetate + ATP + CoA = acetyl-CoA + AMP + diphosphate. In terms of biological role, catalyzes the conversion of acetate into acetyl-CoA (AcCoA), an essential intermediate at the junction of anabolic and catabolic pathways. AcsA undergoes a two-step reaction. In the first half reaction, AcsA combines acetate with ATP to form acetyl-adenylate (AcAMP) intermediate. In the second half reaction, it can then transfer the acetyl group from AcAMP to the sulfhydryl group of CoA, forming the product AcCoA. In Magnetococcus marinus (strain ATCC BAA-1437 / JCM 17883 / MC-1), this protein is Acetyl-coenzyme A synthetase.